We begin with the raw amino-acid sequence, 424 residues long: Calreticulin (424 aa).

An N-terminal signal peptide occupies residues 1 to 29; that stretch reads MAIRARSSSYAAAAVALALALASVAAVAG. N-linked (GlcNAc...) asparagine glycosylation occurs at N61. An intrachain disulfide couples C115 to C147. An alpha-D-glucoside is bound by residues Y119, K121, Y138, and D145. Tandem repeats lie at residues 201 to 212, 220 to 231, 237 to 248, 255 to 266, 270 to 280, 284 to 294, and 298 to 308. The segment at 201-266 is 4 X approximate repeats; sequence KQSGSIYEHW…DAKKPEDWDD (66 aa). Positions 217-262 are enriched in basic and acidic residues; that stretch reads QIKDPEAKKPEDWDDKEYIPDPEDKKPEGYDDIPKEIPDPDAKKPE. The interval 217–289 is disordered; that stretch reads QIKDPEAKKP…PEYKGPWKQK (73 aa). Residues 270–308 are 3 X approximate repeats; it reads GEWTAPTIPNPEYKGPWKQKKIKNPNYQGKWKAPMIDNP. An an alpha-D-glucoside-binding site is contributed by E328. The span at 356 to 385 shows a compositional bias: basic and acidic residues; sequence ETWGKHKDAEKAAFDEAEKKKEEEEAAKAG. The segment at 356 to 424 is disordered; that stretch reads ETWGKHKDAE…DSDDEKHDEL (69 aa). Over residues 386–401 the composition is skewed to acidic residues; sequence EDDDDLDDEDAEDEDK. Residues 402-424 are compositionally biased toward basic and acidic residues; that stretch reads ADEKADSDAEDGKDSDDEKHDEL. Residues 421-424 carry the Prevents secretion from ER motif; that stretch reads HDEL.

This sequence belongs to the calreticulin family. Post-translationally, phosphorylated.

Its subcellular location is the endoplasmic reticulum lumen. Functionally, molecular calcium-binding chaperone promoting folding, oligomeric assembly and quality control in the ER via the calreticulin/calnexin cycle. This lectin may interact transiently with almost all of the monoglucosylated glycoproteins that are synthesized in the ER. The protein is Calreticulin of Oryza sativa subsp. japonica (Rice).